A 109-amino-acid chain; its full sequence is uncharacterized protein (109 aa).

The N-terminal stretch at 1–22 is a signal peptide; it reads MKRFPLFLLFTLLTLSTVPAQA. Positions 39–109 are disordered; that stretch reads AYNPDRGRDY…ERRMEDEYGR (71 aa). Residues 41 to 109 show a composition bias toward basic and acidic residues; sequence NPDRGRDYED…ERRMEDEYGR (69 aa).

This is an uncharacterized protein from Escherichia coli O6:H1 (strain CFT073 / ATCC 700928 / UPEC).